The chain runs to 135 residues: Histone H3 type 1 (135 aa).

The tract at residues Met1–Arg40 is disordered. An N6-methyllysine modification is found at Lys5. Position 10 is an N6-acetyllysine; alternate (Lys10). Lys10 carries the N6-methyllysine; alternate modification. Ser11 bears the Phosphoserine mark. Thr12 is subject to Phosphothreonine. 3 positions are modified to N6-acetyllysine: Lys15, Lys19, and Lys24. At Lys28 the chain carries N6-acetyllysine; alternate. At Lys28 the chain carries N6-methyllysine; alternate. Lys36 and Lys37 each carry N6-methyllysine.

The protein belongs to the histone H3 family. The nucleosome is a histone octamer containing two molecules each of H2A, H2B, H3 and H4 assembled in one H3-H4 heterotetramer and two H2A-H2B heterodimers. The octamer wraps approximately 147 bp of DNA. Post-translationally, acetylation is generally linked to gene activation. Acetylated to form H3K9ac (11%), H3K14ac (17%), H3K18ac (11%), H3K23ac (16%) and H3K27ac (7%). H3K4, H3K35 and H3K36 are not acetylated. H3K4me prevents acetylation. 32% of the histone H3 are acetylated with, on average, 2.4 acetyl-Lys. They are all continuously deacatylated and re-acetylated with a half-life of approximately 2 minutes. In terms of processing, monomethylated to form H3K4me1 (81%), H3K9me1 (16%), H3K27me1 (25%), H3K35me1 (25%) and H3K36me1 (5%). No methylation at H3K14, H3K18 and H3K23. Methylated by a protein complex that includes Mut11. Set1 methylates specifically H3K4. H3K4me1 is associated with silenced euchromatin. Set3 forms H3K9me1, while H3K9me2 is undetected. H3K9me1 is specifically associated with silent, multi-copy transgenes. No phosphorylation detected.

The protein localises to the nucleus. It localises to the chromosome. Its function is as follows. Core component of nucleosome. Nucleosomes wrap and compact DNA into chromatin, limiting DNA accessibility to the cellular machineries which require DNA as a template. Histones thereby play a central role in transcription regulation, DNA repair, DNA replication and chromosomal stability. DNA accessibility is regulated via a complex set of post-translational modifications of histones, also called histone code, and nucleosome remodeling. This is Histone H3 type 1 (ch3-I) from Chlamydomonas reinhardtii (Chlamydomonas smithii).